A 177-amino-acid polypeptide reads, in one-letter code: Thaumatin-like protein (177 aa).

The first 26 residues, 1–26, serve as a signal peptide directing secretion; sequence MASPATSSAVLVVVLVATLAAGGANA.

The protein belongs to the thaumatin family.

The protein resides in the secreted. The chain is Thaumatin-like protein from Oryza sativa subsp. japonica (Rice).